Here is a 666-residue protein sequence, read N- to C-terminus: Fructose-1,6-bisphosphatase class 3 (666 aa).

This sequence belongs to the FBPase class 3 family. The cofactor is Mn(2+).

It catalyses the reaction beta-D-fructose 1,6-bisphosphate + H2O = beta-D-fructose 6-phosphate + phosphate. Its pathway is carbohydrate biosynthesis; gluconeogenesis. In Phocaeicola vulgatus (strain ATCC 8482 / DSM 1447 / JCM 5826 / CCUG 4940 / NBRC 14291 / NCTC 11154) (Bacteroides vulgatus), this protein is Fructose-1,6-bisphosphatase class 3.